Here is a 141-residue protein sequence, read N- to C-terminus: Hemoglobin subunit alpha-D (141 aa).

Positions 1-141 constitute a Globin domain; sequence MLTADDKKLI…VAAVLAEKYR (141 aa). 2 residues coordinate heme b: His58 and His87.

The protein belongs to the globin family. Heterotetramer of two alpha-D chains and two beta chains. As to expression, red blood cells.

Its function is as follows. Involved in oxygen transport from the lung to the various peripheral tissues. The chain is Hemoglobin subunit alpha-D (HBAD) from Struthio camelus (Common ostrich).